The chain runs to 564 residues: Eukaryotic translation initiation factor 3 subunit L (564 aa).

Serine 2 bears the N-acetylserine mark. Positions 331-537 constitute a PCI domain; that stretch reads DAIRVFANIL…IHIADTKVAR (207 aa). An N6-acetyllysine mark is found at lysine 465 and lysine 549.

It belongs to the eIF-3 subunit L family. Component of the eukaryotic translation initiation factor 3 (eIF-3) complex, which is composed of 13 subunits: EIF3A, EIF3B, EIF3C, EIF3D, EIF3E, EIF3F, EIF3G, EIF3H, EIF3I, EIF3J, EIF3K, EIF3L and EIF3M. The eIF-3 complex appears to include 3 stable modules: module A is composed of EIF3A, EIF3B, EIF3G and EIF3I; module B is composed of EIF3F, EIF3H, and EIF3M; and module C is composed of EIF3C, EIF3D, EIF3E, EIF3K and EIF3L. EIF3C of module C binds EIF3B of module A and EIF3H of module B, thereby linking the three modules. EIF3J is a labile subunit that binds to the eIF-3 complex via EIF3B. The eIF-3 complex interacts with RPS6KB1 under conditions of nutrient depletion. Mitogenic stimulation leads to binding and activation of a complex composed of MTOR and RPTOR, leading to phosphorylation and release of RPS6KB1 and binding of EIF4B to eIF-3. Interacts with RRN3.

Its subcellular location is the cytoplasm. Component of the eukaryotic translation initiation factor 3 (eIF-3) complex, which is required for several steps in the initiation of protein synthesis. The eIF-3 complex associates with the 40S ribosome and facilitates the recruitment of eIF-1, eIF-1A, eIF-2:GTP:methionyl-tRNAi and eIF-5 to form the 43S pre-initiation complex (43S PIC). The eIF-3 complex stimulates mRNA recruitment to the 43S PIC and scanning of the mRNA for AUG recognition. The eIF-3 complex is also required for disassembly and recycling of post-termination ribosomal complexes and subsequently prevents premature joining of the 40S and 60S ribosomal subunits prior to initiation. The eIF-3 complex specifically targets and initiates translation of a subset of mRNAs involved in cell proliferation, including cell cycling, differentiation and apoptosis, and uses different modes of RNA stem-loop binding to exert either translational activation or repression. The protein is Eukaryotic translation initiation factor 3 subunit L of Bos taurus (Bovine).